A 196-amino-acid polypeptide reads, in one-letter code: Hibernation-associated plasma protein HP-20 (196 aa).

The N-terminal stretch at 1-23 (MTDVWRLAIFVLMVNVLNDQVSC) is a signal peptide. The Collagen-like domain occupies 25–63 (GPPGPVGYPGVPGVPGPRGPPGQPGAAGRPGDPGPKGPS). The span at 28–47 (GPVGYPGVPGVPGPRGPPGQ) shows a compositional bias: pro residues. Residues 28–64 (GPVGYPGVPGVPGPRGPPGQPGAAGRPGDPGPKGPSV) are disordered. Residues 67–196 (PCRERSAFTV…IYFSGFLISS (130 aa)) form the C1q domain.

As to expression, plasma; synthesized in the liver.

Its subcellular location is the secreted. Its function is as follows. Plasma proteins HP-20, HP-25, HP-27 and HP-55 form a 140 kDa complex via disulfide bonds in the plasma and are hibernation specific. The protein is Hibernation-associated plasma protein HP-20 of Tamias sibiricus (Siberian chipmunk).